The sequence spans 181 residues: MSVEVTNETAWQIDGKIFSDLGVWVMSQMRVSTQSDLTIMFVDPDPIAQLHMRWMNLEGPTDVMSFPMDELRPGDGGTEMEGVLGDIVLCPWVAAQQALAAGHSTMEEMMLLTIHGILHLLGYDHVTPEQERQMFGLQRQLLLTFFALRQGAGARATLPAGTPDALAEWDREHAAGGKTAK.

Residues H115, H119, and H125 each contribute to the Zn(2+) site.

Belongs to the endoribonuclease YbeY family. It depends on Zn(2+) as a cofactor.

The protein localises to the cytoplasm. Functionally, single strand-specific metallo-endoribonuclease involved in late-stage 70S ribosome quality control and in maturation of the 3' terminus of the 16S rRNA. The polypeptide is Endoribonuclease YbeY (Bifidobacterium adolescentis (strain ATCC 15703 / DSM 20083 / NCTC 11814 / E194a)).